The sequence spans 450 residues: tRNA modification GTPase MnmE (450 aa).

Arg-24, Glu-82, and Lys-121 together coordinate (6S)-5-formyl-5,6,7,8-tetrahydrofolate. In terms of domain architecture, TrmE-type G spans 218–375 (GMHVVLVGQP…LRQVLLEAVG (158 aa)). A K(+)-binding site is contributed by Asn-228. Residues 228–233 (NVGKSS), 247–253 (TDIAGTT), 272–275 (DTAG), and 356–358 (SAR) each bind GTP. Ser-232 provides a ligand contact to Mg(2+). The K(+) site is built by Thr-247, Ile-249, and Thr-252. Residue Thr-253 participates in Mg(2+) binding. (6S)-5-formyl-5,6,7,8-tetrahydrofolate is bound at residue Lys-450.

It belongs to the TRAFAC class TrmE-Era-EngA-EngB-Septin-like GTPase superfamily. TrmE GTPase family. In terms of assembly, homodimer. Heterotetramer of two MnmE and two MnmG subunits. K(+) is required as a cofactor.

The protein localises to the cytoplasm. Functionally, exhibits a very high intrinsic GTPase hydrolysis rate. Involved in the addition of a carboxymethylaminomethyl (cmnm) group at the wobble position (U34) of certain tRNAs, forming tRNA-cmnm(5)s(2)U34. The polypeptide is tRNA modification GTPase MnmE (Laribacter hongkongensis (strain HLHK9)).